The following is a 394-amino-acid chain: Phosphoglycerate kinase (394 aa).

Residues 21–23 (DLN), 59–62 (HLGR), Arg117, and Arg150 each bind substrate. ATP is bound by residues Lys201, Glu318, and 344 to 347 (GGDT).

It belongs to the phosphoglycerate kinase family. In terms of assembly, monomer.

It localises to the cytoplasm. The enzyme catalyses (2R)-3-phosphoglycerate + ATP = (2R)-3-phospho-glyceroyl phosphate + ADP. The protein operates within carbohydrate degradation; glycolysis; pyruvate from D-glyceraldehyde 3-phosphate: step 2/5. This chain is Phosphoglycerate kinase, found in Blochmanniella pennsylvanica (strain BPEN).